Consider the following 517-residue polypeptide: Glutamate--tRNA ligase (517 aa).

The 'HIGH' region signature appears at 10–20 (PSPSGFLHVGG). Zn(2+) is bound by residues C107, C109, C134, and D136. A 'KMSKS' region motif is present at residues 250-254 (KLSKR). ATP is bound at residue K253.

This sequence belongs to the class-I aminoacyl-tRNA synthetase family. Glutamate--tRNA ligase type 1 subfamily. As to quaternary structure, monomer. Zn(2+) serves as cofactor.

The protein resides in the cytoplasm. The enzyme catalyses tRNA(Glu) + L-glutamate + ATP = L-glutamyl-tRNA(Glu) + AMP + diphosphate. Its function is as follows. Catalyzes the attachment of glutamate to tRNA(Glu) in a two-step reaction: glutamate is first activated by ATP to form Glu-AMP and then transferred to the acceptor end of tRNA(Glu). The chain is Glutamate--tRNA ligase from Leptospira biflexa serovar Patoc (strain Patoc 1 / ATCC 23582 / Paris).